An 867-amino-acid chain; its full sequence is Pentatricopeptide repeat-containing protein At2g39230, mitochondrial (867 aa).

A mitochondrion-targeting transit peptide spans 1 to 49 (MTTFMVSKRFRPPIFLHRFINPKPISSQTRFLHPPDNQSRDISDSTTET). Residues 27-74 (SQTRFLHPPDNQSRDISDSTTETISTLEFPHKTSVPNHSPLTSTSETE) form a disordered region. Over residues 60 to 72 (SVPNHSPLTSTSE) the composition is skewed to polar residues. PPR repeat units follow at residues 168–202 (TPRA…KVVP), 203–237 (FVPY…GVAG), 238–272 (DNVT…GAEP), 273–307 (DGLL…LGVP), 309–343 (SQET…GIPM), 344–378 (SVIA…GLAP), 379–413 (DKVM…RIAP), 414–444 (SSVL…SFES), 448–482 (HGFM…GIEP), 483–517 (NVVF…GLEP), 518–552 (NNFT…NFEA), 553–588 (NEVI…RYSM), 589–623 (SCTS…GKSP), 624–658 (NVVT…ELKL), 659–693 (DLPA…GLMP), 694–728 (NVSV…GISC), 729–763 (DLFT…GIVP), 764–798 (DEIL…DVTP), and 799–833 (NVLL…GIVH).

It belongs to the PPR family. P subfamily. As to expression, expressed in lateral organ junctions and shoot apical meristem (SAM).

It is found in the mitochondrion. Its function is as follows. Involved in lateral organ development and boundary demarcation. This is Pentatricopeptide repeat-containing protein At2g39230, mitochondrial (LOJ) from Arabidopsis thaliana (Mouse-ear cress).